A 67-amino-acid polypeptide reads, in one-letter code: DNA-directed RNA polymerase subunit omega (67 aa).

The protein belongs to the RNA polymerase subunit omega family. As to quaternary structure, the RNAP catalytic core consists of 2 alpha, 1 beta, 1 beta' and 1 omega subunit. When a sigma factor is associated with the core the holoenzyme is formed, which can initiate transcription.

It catalyses the reaction RNA(n) + a ribonucleoside 5'-triphosphate = RNA(n+1) + diphosphate. Promotes RNA polymerase assembly. Latches the N- and C-terminal regions of the beta' subunit thereby facilitating its interaction with the beta and alpha subunits. This Paracidovorax citrulli (strain AAC00-1) (Acidovorax citrulli) protein is DNA-directed RNA polymerase subunit omega.